We begin with the raw amino-acid sequence, 792 residues long: MKFSENWLRTFVNPPLSTRDLAHALTMAGLEVESVEPVAPAFHKVVVAEVLSVQKHPDADHLQVCKVKTGAAGNDEPLQIVCGAANVRAGIKVPCALSGAQLPGMAIKQTRIRGVESTGMLCSAKELGLEDASSGLLLLSPDAPVGTDFRAYYDLEDNLLTLKLTPNRGDCLGLSGIAREVAAITSQNRQSVEIKPVSAQIAETLAIHVDAATACPLYCGRVVRGISLDVATPQWMVQRLERSGLRAINPVVDVTNYVMLETGQPLHAFDLARIQGGLAGSIHIRFARPGESIELLNGENLVLQPDMLVIADDAKPLALAGIMGGNESGVTSGAVDLFLESAFFSPGVIAGKSFSLGFSSDSAYRFERGVDFGATRAAMERATDLILNICGGRVGPVTELRGSLPARDPIRLGLERVGRVLGVELDEGRVAELLHRLQFGFLNTDAVFYVTPPTYRFDLAIEEDLIEELARMYGYNRIAATMPRAKLDILSAPETRRTRSRLRQILVARDYQEVINYAFVETSWETELAGNRTPIALKNPLSNQLAVMRSSLLGGLISNLQFNLNRKQSRIRLFEIGGCFQKDGQTYSQQEKLAGLCYGDVVEEQWGLPARPVDFYDAKADIEALLWPGELRVAAARHPALHPGKSAEISIDGRIGGFLGELHPRWQQKLGLARSVVLFELNVDVLLARTLPQASEISKYPPIRRDIAVLVPKDVSVQAILDSMRSEKLSIISEIALFDVYQGKGVESDKKSLAFRMLLQDTEKTLTDAQADQVVAKLISVLENRFGARLRS.

A tRNA-binding domain is found at 39–150 (APAFHKVVVA…PDAPVGTDFR (112 aa)). The 76-residue stretch at 405–480 (PARDPIRLGL…RMYGYNRIAA (76 aa)) folds into the B5 domain. Residues Asp-458, Asp-464, Glu-467, and Glu-468 each coordinate Mg(2+). The FDX-ACB domain occupies 698-791 (SKYPPIRRDI…LENRFGARLR (94 aa)).

Belongs to the phenylalanyl-tRNA synthetase beta subunit family. Type 1 subfamily. In terms of assembly, tetramer of two alpha and two beta subunits. The cofactor is Mg(2+).

The protein resides in the cytoplasm. It carries out the reaction tRNA(Phe) + L-phenylalanine + ATP = L-phenylalanyl-tRNA(Phe) + AMP + diphosphate + H(+). This Nitrosospira multiformis (strain ATCC 25196 / NCIMB 11849 / C 71) protein is Phenylalanine--tRNA ligase beta subunit.